A 580-amino-acid chain; its full sequence is PX domain-containing protein kinase-like protein (580 aa).

The PX domain maps to 14 to 126 (LDDTVPLTAA…KFLDPNNYSA (113 aa)). Residues 88-481 (FIAERQKGLQ…VENSEEQPVK (394 aa)) form the Protein kinase domain. The disordered stretch occupies residues 433-551 (EQKQIHQHRR…LPQAVNGVNR (119 aa)). Basic residues-rich tracts occupy residues 437 to 448 (IHQHRRLTRAQS) and 457 to 469 (KRRK…KSKR). Over residues 483 to 514 (SNANNSAGSGASSPLTSPSSPTPPSTAGLSSA) the composition is skewed to low complexity. Pro residues predominate over residues 515-531 (LPPPPPPPPPPPPPAGP). The WH2 domain occupies 549-568 (VNRGALLSSIQNFQKGTLRK).

The protein belongs to the protein kinase superfamily.

It is found in the cytoplasm. It localises to the cell membrane. Functionally, binds to and modulates brain Na,K-ATPase subunits ATP1B1 and ATP1B3 and may thereby participate in the regulation of electrical excitability and synaptic transmission. May not display kinase activity. The sequence is that of PX domain-containing protein kinase-like protein from Rattus norvegicus (Rat).